The primary structure comprises 337 residues: tRNA N6-adenosine threonylcarbamoyltransferase (337 aa).

Residues His111 and His115 each contribute to the Fe cation site. Residues 134-138 (LVSGG), Asp167, Gly180, and Asn272 contribute to the substrate site. Fe cation is bound at residue Asp300.

The protein belongs to the KAE1 / TsaD family. It depends on Fe(2+) as a cofactor.

It localises to the cytoplasm. It catalyses the reaction L-threonylcarbamoyladenylate + adenosine(37) in tRNA = N(6)-L-threonylcarbamoyladenosine(37) in tRNA + AMP + H(+). In terms of biological role, required for the formation of a threonylcarbamoyl group on adenosine at position 37 (t(6)A37) in tRNAs that read codons beginning with adenine. Is involved in the transfer of the threonylcarbamoyl moiety of threonylcarbamoyl-AMP (TC-AMP) to the N6 group of A37, together with TsaE and TsaB. TsaD likely plays a direct catalytic role in this reaction. The sequence is that of tRNA N6-adenosine threonylcarbamoyltransferase from Escherichia coli O127:H6 (strain E2348/69 / EPEC).